A 300-amino-acid polypeptide reads, in one-letter code: Ribosomal protein L11 methyltransferase (300 aa).

Residues T152, G173, D195, and N234 each contribute to the S-adenosyl-L-methionine site.

This sequence belongs to the methyltransferase superfamily. PrmA family.

It is found in the cytoplasm. The enzyme catalyses L-lysyl-[protein] + 3 S-adenosyl-L-methionine = N(6),N(6),N(6)-trimethyl-L-lysyl-[protein] + 3 S-adenosyl-L-homocysteine + 3 H(+). Methylates ribosomal protein L11. This chain is Ribosomal protein L11 methyltransferase, found in Burkholderia cenocepacia (strain HI2424).